A 437-amino-acid chain; its full sequence is Protein arginine methyltransferase NDUFAF7, mitochondrial (437 aa).

The transit peptide at 1–42 (MSGLARLQRLQKFGFLMVSASANRPIQRYQCSRTEKPQKRTS) directs the protein to the mitochondrion.

This sequence belongs to the NDUFAF7 family.

It localises to the mitochondrion. It carries out the reaction L-arginyl-[protein] + 2 S-adenosyl-L-methionine = N(omega),N(omega)'-dimethyl-L-arginyl-[protein] + 2 S-adenosyl-L-homocysteine + 2 H(+). Functionally, arginine methyltransferase involved in the assembly or stability of mitochondrial NADH:ubiquinone oxidoreductase complex (complex I). Acts by mediating symmetric dimethylation of 'Arg-118' of ndufs2 after it assembles into the complex I, stabilizing the early intermediate complex. The polypeptide is Protein arginine methyltransferase NDUFAF7, mitochondrial (Xenopus laevis (African clawed frog)).